Reading from the N-terminus, the 173-residue chain is Chorion class B protein Ld32 (173 aa).

Positions Phe-1–Ser-7 are cleaved as a signal peptide.

The protein belongs to the chorion protein family.

Functionally, this protein is one of many from the eggshell of the gypsy moth. In Lymantria dispar (Gypsy moth), this protein is Chorion class B protein Ld32.